A 209-amino-acid polypeptide reads, in one-letter code: Ribosome maturation factor RimP (209 aa).

Belongs to the RimP family.

The protein resides in the cytoplasm. Its function is as follows. Required for maturation of 30S ribosomal subunits. This is Ribosome maturation factor RimP from Bartonella bacilliformis (strain ATCC 35685 / KC583 / Herrer 020/F12,63).